The sequence spans 145 residues: Large ribosomal subunit protein uL15 (145 aa).

The segment covering 1-13 (MNLHELKYNEGAR) has biased composition (basic and acidic residues). The segment at 1–56 (MNLHELKYNEGARKEKHRVGRGHAAGKGKQAGKGQSGQLKRTGSKPGFEGGQNPWY) is disordered. The span at 14-26 (KEKHRVGRGHAAG) shows a compositional bias: basic residues.

This sequence belongs to the universal ribosomal protein uL15 family. Part of the 50S ribosomal subunit.

In terms of biological role, binds to the 23S rRNA. The sequence is that of Large ribosomal subunit protein uL15 from Mycoplasma mobile (strain ATCC 43663 / 163K / NCTC 11711) (Mesomycoplasma mobile).